The chain runs to 160 residues: Transcription elongation factor GreA (160 aa).

The stretch at Ser-49–Ala-75 forms a coiled coil.

The protein belongs to the GreA/GreB family.

Necessary for efficient RNA polymerase transcription elongation past template-encoded arresting sites. The arresting sites in DNA have the property of trapping a certain fraction of elongating RNA polymerases that pass through, resulting in locked ternary complexes. Cleavage of the nascent transcript by cleavage factors such as GreA or GreB allows the resumption of elongation from the new 3'terminus. GreA releases sequences of 2 to 3 nucleotides. This chain is Transcription elongation factor GreA, found in Clostridium botulinum (strain Alaska E43 / Type E3).